A 221-amino-acid polypeptide reads, in one-letter code: Endonuclease V (221 aa).

Positions 44 and 112 each coordinate Mg(2+).

Belongs to the endonuclease V family. Requires Mg(2+) as cofactor.

It is found in the cytoplasm. It carries out the reaction Endonucleolytic cleavage at apurinic or apyrimidinic sites to products with a 5'-phosphate.. DNA repair enzyme involved in the repair of deaminated bases. Selectively cleaves double-stranded DNA at the second phosphodiester bond 3' to a deoxyinosine leaving behind the intact lesion on the nicked DNA. This Trichormus variabilis (strain ATCC 29413 / PCC 7937) (Anabaena variabilis) protein is Endonuclease V.